Here is a 129-residue protein sequence, read N- to C-terminus: Small ribosomal subunit protein uS11 (129 aa).

It belongs to the universal ribosomal protein uS11 family. As to quaternary structure, part of the 30S ribosomal subunit. Interacts with proteins S7 and S18. Binds to IF-3.

Its function is as follows. Located on the platform of the 30S subunit, it bridges several disparate RNA helices of the 16S rRNA. Forms part of the Shine-Dalgarno cleft in the 70S ribosome. This chain is Small ribosomal subunit protein uS11, found in Marinobacter nauticus (strain ATCC 700491 / DSM 11845 / VT8) (Marinobacter aquaeolei).